The following is a 225-amino-acid chain: Thylakoid lumenal 17.9 kDa protein, chloroplastic (225 aa).

It localises to the plastid. The protein localises to the chloroplast thylakoid lumen. In Arabidopsis thaliana (Mouse-ear cress), this protein is Thylakoid lumenal 17.9 kDa protein, chloroplastic.